Consider the following 96-residue polypeptide: Large ribosomal subunit protein bL28 (96 aa).

Residues 1–22 (MSRRCELTGKGPMTGNNVSHAN) are disordered.

It belongs to the bacterial ribosomal protein bL28 family.

This Ruegeria sp. (strain TM1040) (Silicibacter sp.) protein is Large ribosomal subunit protein bL28.